The sequence spans 1299 residues: Stress response protein NST1 (1299 aa).

A compositionally biased stretch (basic residues) spans 1 to 15; the sequence is MVAHKKSKKKSKKQH. 8 disordered regions span residues 1–104, 200–237, 324–347, 446–486, 543–573, 694–816, 834–868, and 960–981; these read MVAH…EVED, NNTH…TNKN, KSSK…INDI, DVSE…SLVD, RNEI…EDAE, EAEE…REFE, ENQK…QNNS, and YHAN…HGGS. Composition is skewed to basic and acidic residues over residues 18–32 and 64–75; these read AGEK…HAEI and LDRSELNQDHRS. The span at 76–90 shows a compositional bias: low complexity; that stretch reads GSSSSSTNSGGVTNT. Polar residues predominate over residues 325–337; the sequence is SSKQKQVSESTTG. Positions 467-480 are enriched in basic and acidic residues; that stretch reads ENNKKDVIESDSLD. A compositionally biased stretch (acidic residues) spans 547–573; that stretch reads SADEDQASYEWSNDEYEESNDHDEDAE. Positions 675-847 form a coiled coil; sequence ASYQEKEAEK…LNEKSMQKNQ (173 aa). 2 stretches are compositionally biased toward basic and acidic residues: residues 711–816 and 834–843; these read KEKE…REFE and ENQKLNEKSM. 2 stretches are compositionally biased toward polar residues: residues 844–868 and 960–969; these read QKNQ…QNNS and YHANQPSSSE. Residues 971–981 are compositionally biased toward low complexity; sequence PGLLPLSHGGS.

This sequence belongs to the NST1 family.

The protein localises to the cytoplasm. In terms of biological role, may act as a negative regulator of salt tolerance. This Kluyveromyces lactis (strain ATCC 8585 / CBS 2359 / DSM 70799 / NBRC 1267 / NRRL Y-1140 / WM37) (Yeast) protein is Stress response protein NST1 (NST1).